Consider the following 721-residue polypeptide: Ribonucleoside-diphosphate reductase subunit alpha (721 aa).

Residues Thr159, 175-176 (SC), Gly204, 384-388 (NLCSE), and 589-593 (PTGSI) each bind substrate. A disulfide bond links Cys176 and Cys413. Catalysis depends on Asn384, which acts as the Proton acceptor. Cys386 (cysteine radical intermediate) is an active-site residue. The active-site Proton acceptor is Glu388.

Belongs to the ribonucleoside diphosphate reductase large chain family. Tetramer of two alpha and two beta subunits.

It carries out the reaction a 2'-deoxyribonucleoside 5'-diphosphate + [thioredoxin]-disulfide + H2O = a ribonucleoside 5'-diphosphate + [thioredoxin]-dithiol. With respect to regulation, under complex allosteric control mediated by deoxynucleoside triphosphates and ATP binding. The type of nucleotide bound at the specificity site determines substrate preference. It seems probable that ATP makes the enzyme reduce CDP and UDP, dGTP favors ADP reduction and dTTP favors GDP reduction. In terms of biological role, provides the precursors necessary for DNA synthesis. Catalyzes the biosynthesis of deoxyribonucleotides from the corresponding ribonucleotides. The protein is Ribonucleoside-diphosphate reductase subunit alpha (nrdE) of Mycoplasma pneumoniae (strain ATCC 29342 / M129 / Subtype 1) (Mycoplasmoides pneumoniae).